A 256-amino-acid chain; its full sequence is Small ribosomal subunit protein eS1 (256 aa).

The span at 1–18 (MAVGKNKRLSKGKKGVKK) shows a compositional bias: basic residues. The segment at 1 to 21 (MAVGKNKRLSKGKKGVKKRTV) is disordered. N-acetylalanine; partial is present on Ala-2.

Belongs to the eukaryotic ribosomal protein eS1 family. Component of the small ribosomal subunit. Mature ribosomes consist of a small (40S) and a large (60S) subunit. The 40S subunit contains about 33 different proteins and 1 molecule of RNA (18S). The 60S subunit contains about 49 different proteins and 3 molecules of RNA (25S, 5.8S and 5S).

The protein resides in the cytoplasm. This Aspergillus niger (strain ATCC MYA-4892 / CBS 513.88 / FGSC A1513) protein is Small ribosomal subunit protein eS1 (rps1).